The sequence spans 413 residues: Hemocyanin type 2 unit e (413 aa).

Asn-17 carries an N-linked (GlcNAc...) (high mannose) asparagine glycan. His-49 serves as a coordination point for Cu cation. Cys-55 and Cys-66 are joined by a disulfide. The segment at residues 67-69 (CVH) is a cross-link (2'-(S-cysteinyl)-histidine (Cys-His)). Positions 69 and 78 each coordinate Cu cation. N-linked (GlcNAc...) (high mannose) asparagine glycosylation is present at Asn-127. Intrachain disulfides connect Cys-179–Cys-246 and Cys-336–Cys-342. His-189, His-193, and His-220 together coordinate Cu cation.

The protein belongs to the tyrosinase family. Hemocyanin subfamily. As to quaternary structure, decamers of large identical subunits, each containing 8 globular oxygen-binding functional units. It depends on Cu(2+) as a cofactor. In terms of tissue distribution, hemolymph.

The protein localises to the secreted. The protein resides in the extracellular space. Hemocyanins are copper-containing oxygen carriers occurring freely dissolved in the hemolymph of many mollusks and arthropods. In Rapana venosa (Veined rapa whelk), this protein is Hemocyanin type 2 unit e.